A 94-amino-acid polypeptide reads, in one-letter code: (2R)-sulfolactate sulfo-lyase subunit alpha (94 aa).

In terms of domain architecture, AFP-like spans 16-90; it reads VVVVEGVEAG…GEHVHVHNVK (75 aa).

In terms of assembly, (2R)-sulfolactate sulfo-lyase is composed of a SuyA and a SuyB subunit.

Its subcellular location is the cytoplasm. It carries out the reaction (2R)-3-sulfolactate = sulfite + pyruvate + H(+). Together with SuyB, desulfonates sulfolactate to pyruvate and sulfite. In Chromohalobacter salexigens (strain ATCC BAA-138 / DSM 3043 / CIP 106854 / NCIMB 13768 / 1H11), this protein is (2R)-sulfolactate sulfo-lyase subunit alpha (suyA).